A 66-amino-acid polypeptide reads, in one-letter code: UPF0337 protein bsl1473 (66 aa).

This sequence belongs to the UPF0337 (CsbD) family.

This chain is UPF0337 protein bsl1473, found in Bradyrhizobium diazoefficiens (strain JCM 10833 / BCRC 13528 / IAM 13628 / NBRC 14792 / USDA 110).